Consider the following 314-residue polypeptide: Aspartate carbamoyltransferase catalytic subunit (314 aa).

Carbamoyl phosphate-binding residues include arginine 55 and threonine 56. Residue lysine 83 participates in L-aspartate binding. Carbamoyl phosphate is bound by residues arginine 105, histidine 139, and glutamine 142. 2 residues coordinate L-aspartate: arginine 172 and arginine 226. Residues glycine 267 and proline 268 each coordinate carbamoyl phosphate.

This sequence belongs to the aspartate/ornithine carbamoyltransferase superfamily. ATCase family. Heterododecamer (2C3:3R2) of six catalytic PyrB chains organized as two trimers (C3), and six regulatory PyrI chains organized as three dimers (R2).

It catalyses the reaction carbamoyl phosphate + L-aspartate = N-carbamoyl-L-aspartate + phosphate + H(+). It participates in pyrimidine metabolism; UMP biosynthesis via de novo pathway; (S)-dihydroorotate from bicarbonate: step 2/3. Functionally, catalyzes the condensation of carbamoyl phosphate and aspartate to form carbamoyl aspartate and inorganic phosphate, the committed step in the de novo pyrimidine nucleotide biosynthesis pathway. This is Aspartate carbamoyltransferase catalytic subunit from Rhodococcus opacus (strain B4).